The chain runs to 429 residues: Histidinol dehydrogenase (429 aa).

The NAD(+) site is built by Tyr130, Gln191, and Asn214. Residues Ser237, Gln259, and His262 each contribute to the substrate site. Zn(2+)-binding residues include Gln259 and His262. Catalysis depends on proton acceptor residues Glu327 and His328. Substrate-binding residues include His328, Asp361, Glu415, and His420. Residue Asp361 participates in Zn(2+) binding. A Zn(2+)-binding site is contributed by His420.

It belongs to the histidinol dehydrogenase family. Requires Zn(2+) as cofactor.

It carries out the reaction L-histidinol + 2 NAD(+) + H2O = L-histidine + 2 NADH + 3 H(+). The protein operates within amino-acid biosynthesis; L-histidine biosynthesis; L-histidine from 5-phospho-alpha-D-ribose 1-diphosphate: step 9/9. Its function is as follows. Catalyzes the sequential NAD-dependent oxidations of L-histidinol to L-histidinaldehyde and then to L-histidine. In Neisseria meningitidis serogroup A / serotype 4A (strain DSM 15465 / Z2491), this protein is Histidinol dehydrogenase.